Reading from the N-terminus, the 254-residue chain is CRISPR-associated endoribonuclease Cas6 1 (254 aa).

Tyr32 serves as the catalytic Proton acceptor. His47 functions as the Proton donor in the catalytic mechanism.

The protein belongs to the CRISPR-associated protein Cas6/Cse3/CasE family.

Functionally, CRISPR (clustered regularly interspaced short palindromic repeat) is an adaptive immune system that provides protection against mobile genetic elements (viruses, transposable elements and conjugative plasmids). CRISPR clusters contain sequences complementary to antecedent mobile elements and target invading nucleic acids. CRISPR clusters are transcribed and processed into CRISPR RNA (crRNA). This protein processes pre-crRNA into individual crRNA units. This Methanocaldococcus jannaschii (strain ATCC 43067 / DSM 2661 / JAL-1 / JCM 10045 / NBRC 100440) (Methanococcus jannaschii) protein is CRISPR-associated endoribonuclease Cas6 1 (cas6a).